The following is a 377-amino-acid chain: MAIKLKNRWLGVAIPAFLVALIGYGSHYFILSNFLSWNEQIFYQTCQTMIWVSYYLAIYTNPGIPPKDFKPSAEEWHNYCKKCRVYKPERAHHCKTCNQCVLAMDHHCPWTLNCVGHSNFPHFMRFLFWVIFSTAYLLFLLIGRIYLLWSIRHTAFHHRSTSEIIFICIMTPMDAFVLLTVSSLLGRCIYNQCLHGMTQIESWEMDRIQSLHYKNRLLAQVIDRLVERRPEILPAKQHEINKLLSKRYVNQEDFTNFPYDVNPWTNINNAMGPWYLWLWPWSKPPTIGTSFAKNELFFYDPNSSIEDMLMSLPWPPDGLTHHSRALGSGSSIETIVSGGEQVIRDKSVDLRDRLGRNSWYNDWGEDLSDFGVDTELE.

Topologically, residues 1-9 (MAIKLKNRW) are cytoplasmic. The helical transmembrane segment at 10-30 (LGVAIPAFLVALIGYGSHYFI) threads the bilayer. Residues 31–122 (LSNFLSWNEQ…NCVGHSNFPH (92 aa)) lie on the Lumenal side of the membrane. The DHHC domain maps to 78–128 (NYCKKCRVYKPERAHHCKTCNQCVLAMDHHCPWTLNCVGHSNFPHFMRFLF). Residue C108 is the S-palmitoyl cysteine intermediate of the active site. A helical membrane pass occupies residues 123-143 (FMRFLFWVIFSTAYLLFLLIG). Residues 144-163 (RIYLLWSIRHTAFHHRSTSE) are Cytoplasmic-facing. The chain crosses the membrane as a helical span at residues 164-184 (IIFICIMTPMDAFVLLTVSSL). Topologically, residues 185–377 (LGRCIYNQCL…SDFGVDTELE (193 aa)) are lumenal.

Belongs to the DHHC palmitoyltransferase family. PFA4 subfamily.

Its subcellular location is the endoplasmic reticulum membrane. The enzyme catalyses L-cysteinyl-[protein] + hexadecanoyl-CoA = S-hexadecanoyl-L-cysteinyl-[protein] + CoA. In terms of biological role, mediates the reversible addition of palmitate to target proteins, thereby regulating their membrane association and biological function. The chain is Palmitoyltransferase PFA4 from Kluyveromyces lactis (strain ATCC 8585 / CBS 2359 / DSM 70799 / NBRC 1267 / NRRL Y-1140 / WM37) (Yeast).